Here is a 286-residue protein sequence, read N- to C-terminus: MDAAAELTLLEACWRTVVLGIVQGLTEFLPISSTAHLKVVPVLAGWGDPGVAVTAVIQLGSIAAVIGYFRSDLLQVCRGLARALREGDWGSPDARLGIAIAVGTLPVVVAGLLIKLFWPGYETSPLRSVASIGIVSIVMALLLALAERLGQRRKQLPSVQGLDGVVVGLAQALAIIPGVSRSGSTLTASLLFGWQRSDAARFSFLLGIPAITLAGLVELKGAFAEGSVYGPLPMLLGILSAAVVSWLAIAWLLKFLQTNSTWPFVIYRLVFGVVLLALVLANPTLG.

8 helical membrane-spanning segments follow: residues 17–37 (VVLG…TAHL), 49–69 (PGVA…IGYF), 98–118 (IAIA…KLFW), 126–146 (LRSV…LALA), 159–179 (VQGL…IPGV), 204–224 (FLLG…GAFA), 232–252 (LPML…IAWL), and 261–281 (TWPF…LVLA).

Belongs to the UppP family.

It localises to the cell inner membrane. The catalysed reaction is di-trans,octa-cis-undecaprenyl diphosphate + H2O = di-trans,octa-cis-undecaprenyl phosphate + phosphate + H(+). In terms of biological role, catalyzes the dephosphorylation of undecaprenyl diphosphate (UPP). Confers resistance to bacitracin. The protein is Undecaprenyl-diphosphatase of Synechococcus sp. (strain RCC307).